The primary structure comprises 506 residues: Probable cytosol aminopeptidase (506 aa).

2 residues coordinate Mn(2+): K278 and D283. K290 is a catalytic residue. 3 residues coordinate Mn(2+): D301, D360, and E362. R364 is a catalytic residue.

This sequence belongs to the peptidase M17 family. The cofactor is Mn(2+).

Its subcellular location is the cytoplasm. It catalyses the reaction Release of an N-terminal amino acid, Xaa-|-Yaa-, in which Xaa is preferably Leu, but may be other amino acids including Pro although not Arg or Lys, and Yaa may be Pro. Amino acid amides and methyl esters are also readily hydrolyzed, but rates on arylamides are exceedingly low.. It carries out the reaction Release of an N-terminal amino acid, preferentially leucine, but not glutamic or aspartic acids.. Functionally, presumably involved in the processing and regular turnover of intracellular proteins. Catalyzes the removal of unsubstituted N-terminal amino acids from various peptides. This is Probable cytosol aminopeptidase from Ralstonia nicotianae (strain ATCC BAA-1114 / GMI1000) (Ralstonia solanacearum).